The sequence spans 923 residues: Protocadherin gamma-B4 (923 aa).

Positions 1–30 are cleaved as a signal peptide; it reads MGSGAGELGRAERLPVLFLFLLSLFCPALC. 6 consecutive Cadherin domains span residues 31-133, 134-242, 243-345, 346-450, 451-560, and 568-673; these read EQIR…TPKF, TQNS…APVF, SQDI…APEV, IFQS…APVF, SQSS…APRV, and DGSA…LPDI. Topologically, residues 31-689 are extracellular; it reads EQIRYRIPEE…SDLEAELQFY (659 aa). N-linked (GlcNAc...) asparagine glycosylation is found at Asn417 and Asn543. A helical transmembrane segment spans residues 690-710; that stretch reads LVVALALISVLFLVAMILAIA. At 711–923 the chain is on the cytoplasmic side; it reads LRLRRSSSPA…KKKSGKKEKK (213 aa). Disordered regions lie at residues 797 to 832 and 893 to 923; these read SHQQ…WPNN and ATLT…KEKK. A compositionally biased stretch (basic residues) spans 913–923; that stretch reads NKKKSGKKEKK.

The protein localises to the cell membrane. Potential calcium-dependent cell-adhesion protein. May be involved in the establishment and maintenance of specific neuronal connections in the brain. This is Protocadherin gamma-B4 (PCDHGB4) from Pan troglodytes (Chimpanzee).